Reading from the N-terminus, the 375-residue chain is Delta(9) fatty acid conjugase-like enzyme (375 aa).

The next 2 membrane-spanning stretches (helical) occupy residues 38–58 (LSLS…LFYV) and 66–86 (LPYS…GAFL). The short motif at 94–98 (HECGH) is the Histidine box-1 element. Positions 130–134 (HRNHH) match the Histidine box-2 motif. The next 3 helical transmembrane spans lie at 168–188 (FGLV…YLIF), 219–239 (VFFS…IAIA), and 241–261 (GAML…AFIF). Positions 307-311 (HVVHH) match the Histidine box-3 motif.

It belongs to the fatty acid desaturase type 1 family.

It is found in the membrane. Involved in the biosynthesis of dimorphecolic acid (9-OH-18:2(10E,12E)). Catalyzes the formation of the C-9 hydroxyl group and the (E)-delta(10) double bond from the trans-linoleic acid (16:2(9Z,12E)) produced by FAD2-1. Very limited activity with cis-linoleic acid (16:2(9Z,12Z)). The sequence is that of Delta(9) fatty acid conjugase-like enzyme from Dimorphotheca sinuata (African daisy).